Here is a 141-residue protein sequence, read N- to C-terminus: Fluoride-specific ion channel FluC 1 (141 aa).

4 helical membrane-spanning segments follow: residues 12–32, 44–64, 79–99, and 107–127; these read LYAL…LVGV, WATL…AAIA, FVMT…LETF, and ALAA…AVWL. 2 residues coordinate Na(+): glycine 86 and threonine 89.

It belongs to the fluoride channel Fluc/FEX (TC 1.A.43) family.

It is found in the cell inner membrane. It carries out the reaction fluoride(in) = fluoride(out). With respect to regulation, na(+) is not transported, but it plays an essential structural role and its presence is essential for fluoride channel function. Functionally, fluoride-specific ion channel. Important for reducing fluoride concentration in the cell, thus reducing its toxicity. In Rhodopseudomonas palustris (strain BisB18), this protein is Fluoride-specific ion channel FluC 1.